A 186-amino-acid polypeptide reads, in one-letter code: Putative 3-methyladenine DNA glycosylase (186 aa).

It belongs to the DNA glycosylase MPG family.

In Borrelia garinii subsp. bavariensis (strain ATCC BAA-2496 / DSM 23469 / PBi) (Borreliella bavariensis), this protein is Putative 3-methyladenine DNA glycosylase.